We begin with the raw amino-acid sequence, 548 residues long: Chaperonin GroEL 1 (548 aa).

Residues 30 to 33 (TLGP), Lys51, 87 to 91 (DGTTT), Gly415, 479 to 481 (NAA), and Asp495 each bind ATP.

It belongs to the chaperonin (HSP60) family. Forms a cylinder of 14 subunits composed of two heptameric rings stacked back-to-back. Interacts with the co-chaperonin GroES.

Its subcellular location is the cytoplasm. It catalyses the reaction ATP + H2O + a folded polypeptide = ADP + phosphate + an unfolded polypeptide.. In terms of biological role, together with its co-chaperonin GroES, plays an essential role in assisting protein folding. The GroEL-GroES system forms a nano-cage that allows encapsulation of the non-native substrate proteins and provides a physical environment optimized to promote and accelerate protein folding. This chain is Chaperonin GroEL 1, found in Anaeromyxobacter dehalogenans (strain 2CP-C).